Here is a 164-residue protein sequence, read N- to C-terminus: Phosphopantetheine adenylyltransferase (164 aa).

S9 provides a ligand contact to substrate. ATP-binding positions include 9 to 10 and H17; that span reads SF. The substrate site is built by K41, L78, and R92. Residues 93–95, E103, and 128–134 each bind ATP; these read GLR and GRVITST.

It belongs to the bacterial CoaD family. As to quaternary structure, homohexamer. It depends on Mg(2+) as a cofactor.

Its subcellular location is the cytoplasm. It catalyses the reaction (R)-4'-phosphopantetheine + ATP + H(+) = 3'-dephospho-CoA + diphosphate. The protein operates within cofactor biosynthesis; coenzyme A biosynthesis; CoA from (R)-pantothenate: step 4/5. In terms of biological role, reversibly transfers an adenylyl group from ATP to 4'-phosphopantetheine, yielding dephospho-CoA (dPCoA) and pyrophosphate. This chain is Phosphopantetheine adenylyltransferase, found in Bartonella bacilliformis (strain ATCC 35685 / KC583 / Herrer 020/F12,63).